A 157-amino-acid polypeptide reads, in one-letter code: Peptide methionine sulfoxide reductase MsrA (157 aa).

The active site involves cysteine 10.

The protein belongs to the MsrA Met sulfoxide reductase family.

The catalysed reaction is L-methionyl-[protein] + [thioredoxin]-disulfide + H2O = L-methionyl-(S)-S-oxide-[protein] + [thioredoxin]-dithiol. The enzyme catalyses [thioredoxin]-disulfide + L-methionine + H2O = L-methionine (S)-S-oxide + [thioredoxin]-dithiol. Its function is as follows. Has an important function as a repair enzyme for proteins that have been inactivated by oxidation. Catalyzes the reversible oxidation-reduction of methionine sulfoxide in proteins to methionine. This Clostridium perfringens (strain SM101 / Type A) protein is Peptide methionine sulfoxide reductase MsrA.